The following is an 89-amino-acid chain: Large ribosomal subunit protein bL27 (89 aa).

The segment at 1–20 (MAHKKAGGSSRNGRDSAGRR) is disordered.

This sequence belongs to the bacterial ribosomal protein bL27 family.

The protein is Large ribosomal subunit protein bL27 of Rhizorhabdus wittichii (strain DSM 6014 / CCUG 31198 / JCM 15750 / NBRC 105917 / EY 4224 / RW1) (Sphingomonas wittichii).